The chain runs to 347 residues: MNTNDFDFELPEELIAQTPLEQRDASKLLVIDPVTREMTDTHFDHIIDQLNPGDALVMNNTRVLPARLYGEKTDTHGHVEFLLLKNTQGDQWEVLAKPAKRLKVGAKVSFGDGRLTATVTKELDHGGRIVEFSYDGIFLEVLESLGEMPLPPYIHEKLEDRDRYQTVYAKENGSAAAPTAGLHFTPELLQKIEAKGVKLVYLTLHVGLGTFRPVSVDNVDEHEMHSEFYTLSQEAADTLNSVKAAGGRIVAVGTTSIRTLETIGNKYDGQLQADSGWTNIFIKPGYQFTVVDAFSTNFHLPKSTLVMLVSAFAGREFVLEAYKHAVQERYRFFSFGDAMFVTRPSEK.

The protein belongs to the QueA family. In terms of assembly, monomer.

It is found in the cytoplasm. The enzyme catalyses 7-aminomethyl-7-carbaguanosine(34) in tRNA + S-adenosyl-L-methionine = epoxyqueuosine(34) in tRNA + adenine + L-methionine + 2 H(+). Its pathway is tRNA modification; tRNA-queuosine biosynthesis. Transfers and isomerizes the ribose moiety from AdoMet to the 7-aminomethyl group of 7-deazaguanine (preQ1-tRNA) to give epoxyqueuosine (oQ-tRNA). In Streptococcus thermophilus (strain ATCC BAA-491 / LMD-9), this protein is S-adenosylmethionine:tRNA ribosyltransferase-isomerase.